A 558-amino-acid chain; its full sequence is Phosphatidylserine lipase ABHD16A (558 aa).

2 helical membrane-spanning segments follow: residues 60–80 (ILALASVFWSISYYSSPFAFF) and 93–113 (VVPFSHYAGTLLLLLAGVACL). Residues 114 to 558 (RGIGRWTNPQ…AQNFQMPWHL (445 aa)) are Cytoplasmic-facing. Residues 281 to 407 (LVICCEGNAG…LVTRTVRQHL (127 aa)) enclose the AB hydrolase-1 domain. Residues serine 355, aspartate 430, and histidine 507 each act as charge relay system in the active site.

This sequence belongs to the AB hydrolase superfamily. ABHD16 family.

The protein localises to the membrane. It carries out the reaction 1-heptadecanoyl-2-(5Z,8Z,11Z,14Z-eicosatetraenoyl)-sn-glycero-3-phosphoserine + H2O = 1-heptadecanoyl-sn-glycero-3-phosphoserine + (5Z,8Z,11Z,14Z)-eicosatetraenoate + H(+). The catalysed reaction is 1-hexadecanoyl-2-(9Z-octadecenoyl)-sn-glycero-3-phospho-L-serine + H2O = 1-hexadecanoyl-sn-glycero-3-phospho-L-serine + (9Z)-octadecenoate + H(+). The enzyme catalyses 1-octadecanoyl-2-(9Z,12Z-octadecadienoyl)-sn-glycero-3-phosphoserine + H2O = 1-octadecanoyl-sn-glycero-3-phosphoserine + (9Z,12Z)-octadecadienoate + H(+). It catalyses the reaction 1-heptadecanoyl-2-(5Z,8Z,11Z,14Z-eicosatetraenoyl)-sn-glycero-3-phosphocholine + H2O = 1-heptadecanoyl-sn-glycero-3-phosphocholine + (5Z,8Z,11Z,14Z)-eicosatetraenoate + H(+). It carries out the reaction 1-hexadecanoyl-2-(9Z-octadecenoyl)-sn-glycero-3-phosphoglycerol + H2O = 1-hexadecanoyl-sn-glycero-3-phosphoglycerol + (9Z)-octadecenoate + H(+). The catalysed reaction is 1-hexadecanoyl-2-(9Z-octadecenoyl)-sn-glycero-3-phospho-(1D-myo-inositol) + H2O = 1-hexadecanoyl-sn-glycero-3-phospho-(1D-myo-inositol) + (9Z)-octadecenoate + H(+). The enzyme catalyses 1-heptadecanoyl-2-(5Z,8Z,11Z,14Z-eicosatetraenoyl)-sn-glycero-3-phosphoethanolamine + H2O = 1-heptadecanoyl-sn-glycero-3-phosphoethanolamine + (5Z,8Z,11Z,14Z)-eicosatetraenoate + H(+). It catalyses the reaction 1-hexadecanoyl-2-(9Z-octadecenoyl)-sn-glycero-3-phospho-(1'-sn-glycerol) + H2O = 1-hexadecanoyl-sn-glycero-3-phospho-(1'-sn-glycerol) + (9Z)-octadecenoate + H(+). It carries out the reaction Hydrolyzes glycerol monoesters of long-chain fatty acids.. The catalysed reaction is 1-tetradecanoylglycerol + H2O = tetradecanoate + glycerol + H(+). The enzyme catalyses 2-hexadecanoylglycerol + H2O = glycerol + hexadecanoate + H(+). It catalyses the reaction 1-(9Z-octadecenoyl)-glycerol + H2O = glycerol + (9Z)-octadecenoate + H(+). It carries out the reaction 2-(9Z-octadecenoyl)-glycerol + H2O = glycerol + (9Z)-octadecenoate + H(+). The catalysed reaction is 2-(9Z,12Z-octadecadienoyl)-glycerol + H2O = (9Z,12Z)-octadecadienoate + glycerol + H(+). The enzyme catalyses 1-(5Z,8Z,11Z,14Z-eicosatetraenoyl)-glycerol + H2O = glycerol + (5Z,8Z,11Z,14Z)-eicosatetraenoate + H(+). It catalyses the reaction 2-(5Z,8Z,11Z,14Z-eicosatetraenoyl)-glycerol + H2O = glycerol + (5Z,8Z,11Z,14Z)-eicosatetraenoate + H(+). It carries out the reaction prostaglandin D2-1-glycerol ester + H2O = prostaglandin D2 + glycerol + H(+). The catalysed reaction is 2-glyceryl-15-deoxy-Delta(12,14)-prostaglandin J2 + H2O = 15-deoxy-Delta(12,14)-prostaglandin J2 + glycerol + H(+). The enzyme catalyses 1-(9Z,12Z-octadecadienoyl)-glycerol + H2O = (9Z,12Z)-octadecadienoate + glycerol + H(+). With respect to regulation, inhibited by beta-lactone-based lipid inhibitors, such as beta-lactone palmostatin-B. Its function is as follows. Phosphatidylserine (PS) lipase that mediates the hydrolysis of phosphatidylserine to generate lysophosphatidylserine (LPS). LPS constitutes a class of signaling lipids that regulates immunological and neurological processes. Has no activity towards diacylglycerol, triacylglycerol or lysophosphatidylserine lipase. Also has monoacylglycerol lipase activity, with preference for 1-(9Z,12Z-octadecadienoyl)-glycerol (1-LG) and 2-glyceryl-15-deoxy-Delta(12,14)-prostaglandin J2 (15d-PGJ(2)-G). The chain is Phosphatidylserine lipase ABHD16A from Homo sapiens (Human).